A 591-amino-acid polypeptide reads, in one-letter code: L-fucose isomerase (591 aa).

Residues Glu337 and Asp361 each act as proton acceptor in the active site. Mn(2+) contacts are provided by Glu337, Asp361, and His528.

This sequence belongs to the L-fucose isomerase family. As to quaternary structure, homohexamer. Mn(2+) serves as cofactor.

Its subcellular location is the cytoplasm. It carries out the reaction L-fucose = L-fuculose. The protein operates within carbohydrate degradation; L-fucose degradation; L-lactaldehyde and glycerone phosphate from L-fucose: step 1/3. Functionally, converts the aldose L-fucose into the corresponding ketose L-fuculose. This is L-fucose isomerase from Salmonella paratyphi B (strain ATCC BAA-1250 / SPB7).